Reading from the N-terminus, the 328-residue chain is Protein phosphatase 1 regulatory inhibitor subunit PPP1R7 homolog (328 aa).

LRR repeat units lie at residues 13–36, 37–59, 61–82, 86–110, 111–130, 131–153, 154–177, 179–196, 197–221, 223–240, 241–264, 266–287, and 289–312; these read IGDS…VELP, PNLI…IAQL, TLKK…PLSH, LSDL…IFTK, LLVY…ISKA, SSTL…IEHL, HNLQ…NFTK, EELW…LCGL, KCIK…CVAL, ELYL…LSAL, VNLR…NLTK, EDLW…AVTG, and KEKL…VAAV.

As to quaternary structure, interacts with human protein phosphatase PPP1C.

Its function is as follows. Inhibitor of protein-phosphatase 1 (PP1). Binds to and inhibits PP1 activity. The sequence is that of Protein phosphatase 1 regulatory inhibitor subunit PPP1R7 homolog from Arabidopsis thaliana (Mouse-ear cress).